Here is a 142-residue protein sequence, read N- to C-terminus: Mediator of RNA polymerase II transcription subunit 21 (142 aa).

Residues 87–131 adopt a coiled-coil conformation; it reads AEEQLSRIDSLQKKLIQVEGEKIEAIKRKESLTKDIEELINEFTE.

Belongs to the Mediator complex subunit 21 family. In terms of assembly, component of the Mediator complex.

The protein localises to the nucleus. Component of the Mediator complex, a coactivator involved in the regulated transcription of nearly all RNA polymerase II-dependent genes. Mediator functions as a bridge to convey information from gene-specific regulatory proteins to the basal RNA polymerase II transcription machinery. Mediator is recruited to promoters by direct interactions with regulatory proteins and serves as a scaffold for the assembly of a functional preinitiation complex with RNA polymerase II and the general transcription factors. This is Mediator of RNA polymerase II transcription subunit 21 (SRB7) from Eremothecium gossypii (strain ATCC 10895 / CBS 109.51 / FGSC 9923 / NRRL Y-1056) (Yeast).